Here is a 630-residue protein sequence, read N- to C-terminus: Vacuolar protein 8 (630 aa).

Gly2 carries the N-myristoyl glycine lipid modification. ARM repeat units lie at residues 74-115, 117-156, 158-197, 199-238, 242-281, 283-322, 324-364, 408-447, and 456-495; these read EITE…NLAV, AENK…NLAT, DENK…NMTH, DENR…NIAV, NRKK…NLAS, SKYQ…NVSI, PANE…NLAA, DDLK…NLSS, and FNAV…QLLE. 2 disordered regions span residues 519–558 and 572–630; these read AKSP…EGEG and EVGE…GRDR. The span at 543–558 shows a compositional bias: acidic residues; that stretch reads SEDEFEDGLTDQEGEG. The segment covering 598–607 has biased composition (polar residues); it reads GQGQTSQVGS.

The protein belongs to the beta-catenin family.

Its subcellular location is the vacuole membrane. Functions in both vacuole inheritance and protein targeting from the cytoplasm to vacuole. This Cryptococcus neoformans var. neoformans serotype D (strain B-3501A) (Filobasidiella neoformans) protein is Vacuolar protein 8 (VAC8).